A 1724-amino-acid polypeptide reads, in one-letter code: Protein CHROMATIN REMODELING 5 (1724 aa).

Disordered stretches follow at residues 24-88 (QNAA…QSST) and 104-415 (DCQP…DDIE). Over residues 25 to 34 (NAATFQSSPL) the composition is skewed to polar residues. The span at 126–144 (EAYHSEDNHSNDRSEKLDS) shows a compositional bias: basic and acidic residues. Positions 138–164 (RSEKLDSENENDNENEEEDNEMNKHQS) form a coiled coil. Composition is skewed to acidic residues over residues 145–157 (ENEN…EEDN), 170–186 (PADE…DEDN), 239–264 (ADMD…DAAD), and 278–297 (VSDE…YEDD). A compositionally biased stretch (basic residues) spans 301–313 (KKPKVRQQSKGFR). The Nuclear localization signal 1 signature appears at 320 to 327 (ERKSFHVS). The segment covering 337 to 350 (QDDDSEEDSENDND) has biased composition (acidic residues). Residues 362–376 (TLRQNNGRSTNTIGQ) are compositionally biased toward polar residues. Basic and acidic residues predominate over residues 403–412 (DGKNRKNQKD). Residues 420 to 499 (DVIEKVLWHQ…FKKVLNYTKK (80 aa)) enclose the Chromo 1 domain. A coiled-coil region spans residues 505-525 (RYRTALSREEIEVNDVSKEMD). One can recognise a Chromo 2 domain in the interval 533–597 (SQVERIIADR…REVSIAVQGK (65 aa)). A Helicase ATP-binding domain is found at 637–809 (VNSWLNDTNV…WALLHFLDPG (173 aa)). 650 to 657 (DEMGLGKT) is a binding site for ATP. The DEAH box motif lies at 760 to 763 (DEAH). The Helicase C-terminal domain occupies 943–1094 (ILDKLLVRLR…HLVIQKLNAE (152 aa)). The stretch at 1126–1163 (KEDKNDEESKKRLLSMDIDEILERAEQVEEKHTDETEH) forms a coiled coil. Positions 1199–1245 (ALAPRAARNTKSYVDPSHPDRTSKRKKKGSEPPEHTERSQKRRKTEY) are disordered. 2 short sequence motifs (nuclear localization signal) span residues 1224 to 1231 (KKKGSEPP) and 1348 to 1355 (LKRVQGLQ). Positions 1227–1237 (GSEPPEHTERS) are enriched in basic and acidic residues. 2 disordered regions span residues 1480–1524 (QFKA…EMSD) and 1654–1724 (KFKT…FPPR). The span at 1504–1520 (DGPRKTQKAEPLVKEEG) shows a compositional bias: basic and acidic residues. The segment covering 1658–1667 (AGNSQGSQQV) has biased composition (polar residues). The segment covering 1669-1691 (KGIDTAKFEAWKRRRRTENDVQT) has biased composition (basic and acidic residues). Residues 1692-1702 (ERPTITNSNSL) are compositionally biased toward polar residues.

The protein belongs to the SNF2/RAD54 helicase family.

It localises to the nucleus. In terms of biological role, DNA-binding helicase that specifically binds to the promoter of target genes, leading to chromatin remodeling, possibly by promoting deposition of histone H3.3. Probable chromatin remodeling factor. This chain is Protein CHROMATIN REMODELING 5, found in Arabidopsis thaliana (Mouse-ear cress).